We begin with the raw amino-acid sequence, 141 residues long: ATP synthase epsilon chain (141 aa).

It belongs to the ATPase epsilon chain family. In terms of assembly, F-type ATPases have 2 components, CF(1) - the catalytic core - and CF(0) - the membrane proton channel. CF(1) has five subunits: alpha(3), beta(3), gamma(1), delta(1), epsilon(1). CF(0) has three main subunits: a, b and c.

Its subcellular location is the cell inner membrane. Its function is as follows. Produces ATP from ADP in the presence of a proton gradient across the membrane. The sequence is that of ATP synthase epsilon chain from Azoarcus sp. (strain BH72).